The following is a 240-amino-acid chain: Putative RING finger protein ORF96 (240 aa).

Residues 9–44 (CVVCMEEKPLVVFEPCMHHNCCESCSGHVSNCPYCR) form an RING-type 1 zinc finger. The RING-type 2; degenerate zinc finger occupies 150 to 202 (CVICKKEIKEEVGKTYMHACCTATICKPCAKAILKAMVEKEITENLPFCPYCF).

The sequence is that of Putative RING finger protein ORF96 from Ostreid herpesvirus 1 (isolate France) (OsHV-1).